Reading from the N-terminus, the 358-residue chain is Glutamine synthetase (358 aa).

Positions 25-104 constitute a GS beta-grasp domain; sequence VQAEYIWIDA…VLCECYDNDG (80 aa). Positions 111–358 constitute a GS catalytic domain; sequence YRAHCKKVMD…ILVETTVLNN (248 aa).

It belongs to the glutamine synthetase family. Homooctamer.

The protein resides in the cytoplasm. It catalyses the reaction L-glutamate + NH4(+) + ATP = L-glutamine + ADP + phosphate + H(+). The polypeptide is Glutamine synthetase (GLN1) (Cryptococcus neoformans var. neoformans serotype D (strain B-3501A) (Filobasidiella neoformans)).